Consider the following 194-residue polypeptide: Interferon alpha (194 aa).

Residues 1-23 form the signal peptide; sequence MALPSSFLVALVALGCNSVCSLG. Disulfide bonds link Cys24–Cys123 and Cys52–Cys166. N-linked (GlcNAc...) asparagine glycosylation is present at Asn102.

It belongs to the alpha/beta interferon family.

The protein resides in the secreted. Its function is as follows. Produced by macrophages, IFN-alpha have antiviral activities. Interferon stimulates the production of two enzymes: a protein kinase and an oligoadenylate synthetase. In Felis catus (Cat), this protein is Interferon alpha.